A 418-amino-acid polypeptide reads, in one-letter code: MKAEIIAVGTEILTGQIVNTNAQFLSEKLAEIGVDVYFQTAVGDNEVRLLSLLEIASQRSSLVILTGGLGPTEDDLTKQTLAKFLGKALVFDPQAQEKLDIFFALRPDYARTPNNERQAQIVEGAIPLPNETGLAVGGKLEVDGVTYVVLPGPPSELKPMVLNQLLPKLMTGSKLYSRVLRFFGIGESQLVTILADLIDNQIDPTLAPYAKTGEVTLRLSTKASSQEEANQALDILENQILDCQTFEGISLRDFCYGYGEETSLASIVVEELKRQGKTIAAAESLTAGLFQATVANFSGVSSIFKGGFVTYSLEEKSRMLDIPAKNLEEHGVVSEFTAQKMAEQARSKTQSDFGISLTGVAGPDSLEGHPVGTVFIGLAQEQGTEVIKVNIGGRSRADVRHIAVMHAFNLVRKALLSD.

The protein belongs to the CinA family.

This chain is Putative competence-damage inducible protein, found in Streptococcus pneumoniae (strain JJA).